The following is a 355-amino-acid chain: Phospho-N-acetylmuramoyl-pentapeptide-transferase (355 aa).

Helical transmembrane passes span Gly3 to Ile23, Val56 to Phe76, Gly80 to Ile100, Ala120 to Leu140, Thr152 to Thr172, Leu185 to Phe205, Pro224 to Trp244, Ile251 to Val271, Leu276 to Val296, and Phe330 to Leu350.

Belongs to the glycosyltransferase 4 family. MraY subfamily. The cofactor is Mg(2+).

Its subcellular location is the cell membrane. It carries out the reaction UDP-N-acetyl-alpha-D-muramoyl-L-alanyl-gamma-D-glutamyl-meso-2,6-diaminopimeloyl-D-alanyl-D-alanine + di-trans,octa-cis-undecaprenyl phosphate = di-trans,octa-cis-undecaprenyl diphospho-N-acetyl-alpha-D-muramoyl-L-alanyl-D-glutamyl-meso-2,6-diaminopimeloyl-D-alanyl-D-alanine + UMP. Its pathway is cell wall biogenesis; peptidoglycan biosynthesis. Catalyzes the initial step of the lipid cycle reactions in the biosynthesis of the cell wall peptidoglycan: transfers peptidoglycan precursor phospho-MurNAc-pentapeptide from UDP-MurNAc-pentapeptide onto the lipid carrier undecaprenyl phosphate, yielding undecaprenyl-pyrophosphoryl-MurNAc-pentapeptide, known as lipid I. The protein is Phospho-N-acetylmuramoyl-pentapeptide-transferase of Frankia alni (strain DSM 45986 / CECT 9034 / ACN14a).